The following is a 406-amino-acid chain: Tyrosine--tRNA ligase (406 aa).

Y34 contacts L-tyrosine. Residues 39-48 carry the 'HIGH' region motif; it reads PTADSLHVGH. Y167 and Q171 together coordinate L-tyrosine. The 'KMSKS' region motif lies at 227–231; that stretch reads KMGKT. K230 is an ATP binding site. In terms of domain architecture, S4 RNA-binding spans 339 to 404; the sequence is RKIVDVLFEA…GKKEYHRLLV (66 aa).

It belongs to the class-I aminoacyl-tRNA synthetase family. TyrS type 1 subfamily. As to quaternary structure, homodimer.

It is found in the cytoplasm. The enzyme catalyses tRNA(Tyr) + L-tyrosine + ATP = L-tyrosyl-tRNA(Tyr) + AMP + diphosphate + H(+). Functionally, catalyzes the attachment of tyrosine to tRNA(Tyr) in a two-step reaction: tyrosine is first activated by ATP to form Tyr-AMP and then transferred to the acceptor end of tRNA(Tyr). This is Tyrosine--tRNA ligase from Caldanaerobacter subterraneus subsp. tengcongensis (strain DSM 15242 / JCM 11007 / NBRC 100824 / MB4) (Thermoanaerobacter tengcongensis).